Reading from the N-terminus, the 267-residue chain is 3-methyl-2-oxobutanoate hydroxymethyltransferase (267 aa).

2 residues coordinate Mg(2+): Asp-42 and Asp-86. 3-methyl-2-oxobutanoate-binding positions include 42–43, Asp-86, and Lys-116; that span reads DS. Glu-118 is a binding site for Mg(2+). Glu-185 acts as the Proton acceptor in catalysis.

Belongs to the PanB family. As to quaternary structure, homodecamer; pentamer of dimers. Mg(2+) is required as a cofactor.

It is found in the cytoplasm. It catalyses the reaction 3-methyl-2-oxobutanoate + (6R)-5,10-methylene-5,6,7,8-tetrahydrofolate + H2O = 2-dehydropantoate + (6S)-5,6,7,8-tetrahydrofolate. It participates in cofactor biosynthesis; (R)-pantothenate biosynthesis; (R)-pantoate from 3-methyl-2-oxobutanoate: step 1/2. Catalyzes the reversible reaction in which hydroxymethyl group from 5,10-methylenetetrahydrofolate is transferred onto alpha-ketoisovalerate to form ketopantoate. This chain is 3-methyl-2-oxobutanoate hydroxymethyltransferase, found in Parasynechococcus marenigrum (strain WH8102).